Consider the following 132-residue polypeptide: Small ribosomal subunit protein uS8c (132 aa).

Belongs to the universal ribosomal protein uS8 family. Part of the 30S ribosomal subunit.

The protein localises to the plastid. The protein resides in the chloroplast. Functionally, one of the primary rRNA binding proteins, it binds directly to 16S rRNA central domain where it helps coordinate assembly of the platform of the 30S subunit. The chain is Small ribosomal subunit protein uS8c (rps8) from Buxus microphylla (Littleleaf boxwood).